Here is a 187-residue protein sequence, read N- to C-terminus: Imidazoleglycerol-phosphate dehydratase (187 aa).

Belongs to the imidazoleglycerol-phosphate dehydratase family.

The protein resides in the cytoplasm. It carries out the reaction D-erythro-1-(imidazol-4-yl)glycerol 3-phosphate = 3-(imidazol-4-yl)-2-oxopropyl phosphate + H2O. It functions in the pathway amino-acid biosynthesis; L-histidine biosynthesis; L-histidine from 5-phospho-alpha-D-ribose 1-diphosphate: step 6/9. The chain is Imidazoleglycerol-phosphate dehydratase from Pyrobaculum calidifontis (strain DSM 21063 / JCM 11548 / VA1).